Reading from the N-terminus, the 265-residue chain is Histone H1 (265 aa).

Positions 1-27 (MATEEPIVAVETVPEPIVTEPTTITEP) are enriched in low complexity. Disordered regions lie at residues 1-66 (MATE…PTYE), 131-226 (AAKK…TTPG), and 242-265 (VKSV…GGRK). Basic and acidic residues predominate over residues 29–42 (VPEKEEPKAEVEKT). Basic residues predominate over residues 43-55 (KKAKGSKPKKASK). In terms of domain architecture, H15 spans 61 to 130 (SHPTYEEMIK…KVKGSFKLSA (70 aa)). Over residues 140–171 (PKAKTAAKAKSVKAKPAAKPKAKAVVKPKVAS) the composition is skewed to basic residues. The segment covering 186-202 (KPKTVAAKTKPTAAKPK) has biased composition (low complexity). The segment covering 203 to 215 (AVVKPKSKVKPAK) has biased composition (basic residues). Low complexity predominate over residues 216 to 226 (VAKTSVKTTPG).

It belongs to the histone H1/H5 family.

Its subcellular location is the nucleus. The protein localises to the chromosome. Its function is as follows. Histones H1 are necessary for the condensation of nucleosome chains into higher-order structures. In Pisum sativum (Garden pea), this protein is Histone H1.